The chain runs to 348 residues: Major outer membrane protein P.IB (348 aa).

Residues 1 to 19 (MKKSLIALTLAALPVAAMA) form the signal peptide.

This sequence belongs to the Gram-negative porin family. Homotrimer.

Its subcellular location is the cell outer membrane. In terms of biological role, serves as a slightly cation selective porin. Major antigen on the gonococcal cell surface and it may have pathogenic properties in addition to its porin activity. The protein is Major outer membrane protein P.IB (porB) of Neisseria gonorrhoeae.